The following is a 164-amino-acid chain: Protein-export protein SecB (164 aa).

The protein belongs to the SecB family. As to quaternary structure, homotetramer, a dimer of dimers. One homotetramer interacts with 1 SecA dimer.

The protein resides in the cytoplasm. One of the proteins required for the normal export of preproteins out of the cell cytoplasm. It is a molecular chaperone that binds to a subset of precursor proteins, maintaining them in a translocation-competent state. It also specifically binds to its receptor SecA. This chain is Protein-export protein SecB, found in Orientia tsutsugamushi (strain Ikeda) (Rickettsia tsutsugamushi).